The sequence spans 392 residues: Isocitrate dehydrogenase [NAD] subunit gamma, mitochondrial (392 aa).

The transit peptide at 1-39 directs the protein to the mitochondrion; sequence MALKVATAAGGAVKAALRPALLWRPWEVLGSHEAPRRSF. Citrate is bound by residues Thr119 and Asn132. The substrate site is built by Arg135, Arg166, and Asp253. Asp253 contacts Mn(2+). ADP contacts are provided by Asn311, Thr312, and Asn323.

It belongs to the isocitrate and isopropylmalate dehydrogenases family. In terms of assembly, heterooligomer of subunits alpha (IDH3A), beta (IDH3B), and gamma (IDH3G) in the apparent ratio of 2:1:1. The heterodimer containing one IDH3A and one IDH3B subunit and the heterodimer containing one IDH3A and one IDH3G subunit assemble into a heterotetramer (which contains two subunits of IDH3A, one of IDH3B and one of IDH3G) and further into the heterooctamer. It depends on Mg(2+) as a cofactor. Mn(2+) is required as a cofactor.

The protein resides in the mitochondrion. Its activity is regulated as follows. The heterotetramer and the heterodimer composed of IDH3A and IDH3G subunits can be allosterically activated by citrate (CIT) or/and ADP, and the two activators can act independently or synergistically. The heterodimer composed of IDH3A and IDH3B subunits cannot be allosterically regulated and the allosteric regulation of the heterotetramer is through the IDH3G subunit and not the IDH3B subunit. The IDH3G subunit contains the allosteric site which consists of a CIT-binding site and an ADP-binding site, and the binding of CIT and ADP causes conformational changes at the allosteric site which are transmitted to the active site in the catalytic subunit (IDH3A) through a cascade of conformational changes at the heterodimer interface, leading to stabilization of the isocitrate-binding at the active site and thus activation of the enzyme. ATP can activate the heterotetramer and the heterodimer composed of IDH3A and IDH3G subunits at low concentrations but inhibits their activities at high concentrations, whereas ATP exhibits only inhibitory effect on the heterodimer composed of IDH3A and IDH3B subunits. Its function is as follows. Regulatory subunit which plays a role in the allosteric regulation of the enzyme catalyzing the decarboxylation of isocitrate (ICT) into alpha-ketoglutarate. The heterodimer composed of the alpha (IDH3A) and beta (IDH3B) subunits and the heterodimer composed of the alpha (IDH3A) and gamma (IDH3G) subunits, have considerable basal activity but the full activity of the heterotetramer (containing two subunits of IDH3A, one of IDH3B and one of IDH3G) requires the assembly and cooperative function of both heterodimers. In Bos taurus (Bovine), this protein is Isocitrate dehydrogenase [NAD] subunit gamma, mitochondrial (IDH3G).